We begin with the raw amino-acid sequence, 60 residues long: Large ribosomal subunit protein uL30 (60 aa).

Belongs to the universal ribosomal protein uL30 family. As to quaternary structure, part of the 50S ribosomal subunit.

This chain is Large ribosomal subunit protein uL30, found in Desulfotalea psychrophila (strain LSv54 / DSM 12343).